The primary structure comprises 203 residues: Monothiol glutaredoxin-7 (203 aa).

The signal sequence occupies residues Met-1–Ala-32. Residues Ala-88–Ala-191 form the Glutaredoxin domain. Residue Cys-108 participates in [2Fe-2S] cluster binding.

It belongs to the glutaredoxin family. Monothiol subfamily.

In Saccharomyces cerevisiae (strain ATCC 204508 / S288c) (Baker's yeast), this protein is Monothiol glutaredoxin-7 (GRX7).